Reading from the N-terminus, the 381-residue chain is Transcriptional regulatory protein FlgR (381 aa).

The Response regulatory domain maps to 2–113; sequence KIAIVEDDIN…LLLESIYRTK (112 aa). 4-aspartylphosphate is present on Asp-51. The Sigma-54 factor interaction domain occupies 136–365; it reads FLAASKALEE…LLGVVERAAI (230 aa). ATP-binding positions include 164–171 and 227–236; these read GESGVGKE and ANKGTIFLDE.

In terms of processing, phosphorylated by FlgS.

In terms of biological role, member of the two-component regulatory system FlgR/FlgS that induces the transcriptional induction of the genes needed in motility and flagellar biogenesis. Upon phosphorylation by FlgS, functions as a transcriptional regulator and activates transcription of RpoN-dependent flagellar genes. The polypeptide is Transcriptional regulatory protein FlgR (flgR) (Helicobacter pylori (strain ATCC 700392 / 26695) (Campylobacter pylori)).